Reading from the N-terminus, the 27-residue chain is Phospholipase A2 taicatoxin (27 aa).

Belongs to the phospholipase A2 family. Group I subfamily. In terms of assembly, heterotrimer composed of an alpha-neurotoxin-like peptide of 8 kDa (AC P0CJ35), this neurotoxic phospholipase of 16 kDa and a serine protease inhibitor of 7 kDa (AC B7S4N9) at an approximate stoichiometry of 1:1:4; non-covalently linked. It depends on Ca(2+) as a cofactor. Contains 7 disulfide bonds. Expressed by the venom gland.

Its subcellular location is the secreted. It catalyses the reaction a 1,2-diacyl-sn-glycero-3-phosphocholine + H2O = a 1-acyl-sn-glycero-3-phosphocholine + a fatty acid + H(+). Its function is as follows. Heterotrimer: blocks the voltage-dependent L-type calcium channels from the heart, and the small conductance calcium-activated potassium channels in the chromaffin cells and in the brain. Is very toxic to mice. Monomer: Snake venom phospholipase A2 (PLA2) that has neurotoxic activities. Voltage-dependently affects ionic currents in chick (Gallus domesticus) dorsal root ganglion cells. PLA2 catalyzes the calcium-dependent hydrolysis of the 2-acyl groups in 3-sn-phosphoglycerides. This chain is Phospholipase A2 taicatoxin, found in Oxyuranus scutellatus scutellatus (Australian taipan).